Here is a 651-residue protein sequence, read N- to C-terminus: Polyadenylate-binding protein 1 (651 aa).

Residues 1–27 show a composition bias toward low complexity; sequence MSSTESPVPAAAAPAEAVPASTPAPAA. The tract at residues 1–42 is disordered; the sequence is MSSTESPVPAAAAPAEAVPASTPAPAAEQPAVGNGEQRNNAD. 4 consecutive RRM domains span residues 47 to 125, 135 to 211, 227 to 304, and 330 to 407; these read TSLY…WSQR, GNIF…HHIP, TNVY…RAQK, and VNLY…LAQR. Disordered stretches follow at residues 481-554 and 632-651; these read QPGQ…EADQ and QNDS…KTEA. The segment covering 529–540 has biased composition (pro residues); sequence AGQPVPGQPMPR. The PABC domain maps to 555–632; the sequence is PGALTAAALA…ALEVLKEYQQ (78 aa). Residues 636-651 show a composition bias toward low complexity; sequence AGAEAEANAEAPKTEA.

The protein belongs to the polyadenylate-binding protein type-1 family. In terms of assembly, part of large ribonucleoprotein complexes (mRNPs) containing RNA-binding proteins RRM4 and PAB1, endosome-binding protein UPA1, core scaffold protein UPA2 and associated factor GRP1. Interacts (via PABC domain) with UPA1 (via PAM2 domain). Interacts (via PABC domain) with UPA2 (via PAM2 domains).

The protein resides in the cytoplasm. It localises to the cytoskeleton. Its subcellular location is the endosome. In terms of biological role, RNA-binding protein involved in the formation of polar-growing hyphae which is essential for infection by the plant pathogen. Component of endosomal mRNA transport that regulates polarity of the infectious hyphae by transporting a broad spectrum of cargo mRNAs from the nucleus to cell poles. In Mycosarcoma maydis (Corn smut fungus), this protein is Polyadenylate-binding protein 1.